The following is a 197-amino-acid chain: uncharacterized protein (197 aa).

Residues 168-185 show a composition bias toward basic and acidic residues; the sequence is QRDDFSEDSHANDPKLVG. Residues 168–197 are disordered; the sequence is QRDDFSEDSHANDPKLVGDDYVPQAPEQIN.

This is an uncharacterized protein from Escherichia coli (strain K12).